Here is a 351-residue protein sequence, read N- to C-terminus: Histidinol-phosphate aminotransferase (351 aa).

Lys-221 bears the N6-(pyridoxal phosphate)lysine mark.

This sequence belongs to the class-II pyridoxal-phosphate-dependent aminotransferase family. Histidinol-phosphate aminotransferase subfamily. Homodimer. Pyridoxal 5'-phosphate is required as a cofactor.

It carries out the reaction L-histidinol phosphate + 2-oxoglutarate = 3-(imidazol-4-yl)-2-oxopropyl phosphate + L-glutamate. It functions in the pathway amino-acid biosynthesis; L-histidine biosynthesis; L-histidine from 5-phospho-alpha-D-ribose 1-diphosphate: step 7/9. This is Histidinol-phosphate aminotransferase from Staphylococcus haemolyticus (strain JCSC1435).